The primary structure comprises 115 residues: Large ribosomal subunit protein bL19 (115 aa).

The protein belongs to the bacterial ribosomal protein bL19 family.

In terms of biological role, this protein is located at the 30S-50S ribosomal subunit interface and may play a role in the structure and function of the aminoacyl-tRNA binding site. In Thermosipho melanesiensis (strain DSM 12029 / CIP 104789 / BI429), this protein is Large ribosomal subunit protein bL19.